Reading from the N-terminus, the 139-residue chain is MGMLNEFKAFAVKGNVVDMAVGIIIGAAFGKIVSSFVGDVIMPPLGLLIGGVDFSDLAITLKAAEGDVPAVVLAYGKFIQTVIDFVIVAFAIFMGVKAINKLKREEAVAPTTPPVPSAEETLLTEIRDLLKTQNQNRLP.

Transmembrane regions (helical) follow at residues 9-29 (AFAV…GAAF) and 79-99 (IQTV…VKAI).

This sequence belongs to the MscL family. Homopentamer.

The protein localises to the cell inner membrane. Its function is as follows. Channel that opens in response to stretch forces in the membrane lipid bilayer. May participate in the regulation of osmotic pressure changes within the cell. The sequence is that of Large-conductance mechanosensitive channel from Pseudomonas putida (strain ATCC 47054 / DSM 6125 / CFBP 8728 / NCIMB 11950 / KT2440).